The primary structure comprises 358 residues: Oligopeptide transport ATP-binding protein OppD (358 aa).

The 252-residue stretch at 8 to 259 (LEVKDLAISF…PRHPYTWGLL (252 aa)) folds into the ABC transporter domain. An ATP-binding site is contributed by 44–51 (GESGSGKS).

This sequence belongs to the ABC transporter superfamily. In terms of assembly, the complex is composed of two ATP-binding proteins (OppD and OppF), two transmembrane proteins (OppB and OppC) and a solute-binding protein (OppA).

It localises to the cell membrane. It catalyses the reaction a [peptide](out) + ATP + H2O = a [peptide](in) + ADP + phosphate + H(+). Part of the ABC transporter complex OppABCDF involved in the uptake of oligopeptides. Probably responsible for energy coupling to the transport system. Required for sporulation and genetic competence. The polypeptide is Oligopeptide transport ATP-binding protein OppD (Bacillus subtilis (strain 168)).